Consider the following 270-residue polypeptide: 3-methyl-2-oxobutanoate hydroxymethyltransferase (270 aa).

Mg(2+)-binding residues include Asp43 and Asp82. 3-methyl-2-oxobutanoate contacts are provided by residues 43 to 44 (DS), Asp82, and Lys110. Glu112 contributes to the Mg(2+) binding site. The active-site Proton acceptor is Glu179.

Belongs to the PanB family. As to quaternary structure, homodecamer; pentamer of dimers. Mg(2+) is required as a cofactor.

It is found in the cytoplasm. The enzyme catalyses 3-methyl-2-oxobutanoate + (6R)-5,10-methylene-5,6,7,8-tetrahydrofolate + H2O = 2-dehydropantoate + (6S)-5,6,7,8-tetrahydrofolate. Its pathway is cofactor biosynthesis; (R)-pantothenate biosynthesis; (R)-pantoate from 3-methyl-2-oxobutanoate: step 1/2. Its function is as follows. Catalyzes the reversible reaction in which hydroxymethyl group from 5,10-methylenetetrahydrofolate is transferred onto alpha-ketoisovalerate to form ketopantoate. The polypeptide is 3-methyl-2-oxobutanoate hydroxymethyltransferase (Psychrobacter sp. (strain PRwf-1)).